The chain runs to 372 residues: MPTTLRRAHVHRLPMRSPDDVAALEAAITQGTIDPAGIVAILGKTEGNGCVNDFTRAFAVRSLEALLGRHLATEAVRQIAMVMSGGTEGALSPHMIVFEAREVDEGHAPRAFAASLALGRARTPVLPSEHLGRMQQVAQVAAGVRAAMNDAGITDAGDVHYVQVKCPLLTMERIEAAEARGVRTAVRDTLKSMGFSRGASALGVAVALGELAMDELSDTEICTDYARYSERAATSGGVELLDHEIMVAGMSRDWTGPLAIDHGVMRDAIDIEPARAALARLGLDVPGQLPAAARGRIAAVLAKAEAAQSGKVRDVRHTMLDDSDVSSTRHARAFVGGALAGLFGFTDLFVSGGAEHQGPDGGGPVAIIVERT.

The tract at residues 1 to 105 (MPTTLRRAHV…IVFEAREVDE (105 aa)) is RU A. Residues arginine 56 and 84–85 (SG) contribute to the substrate site. Residues 115-252 (SLALGRARTP…HEIMVAGMSR (138 aa)) form an RU B region. Residue lysine 165 is part of the active site. Residues arginine 197 and 235 to 236 (SG) each bind substrate. The active-site Nucleophile is serine 235. Residues 258–372 (LAIDHGVMRD…GPVAIIVERT (115 aa)) form an RU C region. Glutamate 305 is a Mg(2+) binding site. Residues arginine 332 and 351-352 (SG) each bind substrate. Positions 354, 357, 358, 359, and 362 each coordinate Mg(2+).

This sequence belongs to the cyclic amide hydrolase (CyAH) family. Homotetramer.

The enzyme catalyses cyanurate + H2O = 1-carboxybiuret + H(+). It functions in the pathway xenobiotic degradation; atrazine degradation; biuret from cyanurate: step 1/1. Its activity is regulated as follows. Inhibited by barbituric acid. In terms of biological role, responsible for the hydrolysis of cyanuric acid, an intermediate formed during catabolism of s-triazine based compounds in herbicides such as atrazine and polymers such as melamine. Catalyzes the hydrolytic opening of the s-triazine ring of cyanuric acid (2,4,6-trihydroxy-s-triazine) to yield carbon dioxide and carboxybiuret, which spontaneously decarboxylates to biuret. The chain is Cyanuric acid amidohydrolase from Bradyrhizobium sp. (strain ORS 375).